Here is a 179-residue protein sequence, read N- to C-terminus: Large ribosomal subunit protein uL5 (179 aa).

The protein belongs to the universal ribosomal protein uL5 family. Part of the 50S ribosomal subunit; part of the 5S rRNA/L5/L18/L25 subcomplex. Contacts the 5S rRNA and the P site tRNA. Forms a bridge to the 30S subunit in the 70S ribosome.

In terms of biological role, this is one of the proteins that bind and probably mediate the attachment of the 5S RNA into the large ribosomal subunit, where it forms part of the central protuberance. In the 70S ribosome it contacts protein S13 of the 30S subunit (bridge B1b), connecting the 2 subunits; this bridge is implicated in subunit movement. Contacts the P site tRNA; the 5S rRNA and some of its associated proteins might help stabilize positioning of ribosome-bound tRNAs. The protein is Large ribosomal subunit protein uL5 of Bacillus anthracis (strain A0248).